Here is a 67-residue protein sequence, read N- to C-terminus: MRIEQINARALEKVNYDRYLLSQAIAKRVNELINGAKPLIELPKPNMQLTEIATLEIAEGLVKVKEV.

The protein belongs to the RNA polymerase subunit omega family. The RNAP catalytic core consists of 2 alpha, 1 beta, 1 beta' and 1 omega subunit. When a sigma factor is associated with the core the holoenzyme is formed, which can initiate transcription.

It catalyses the reaction RNA(n) + a ribonucleoside 5'-triphosphate = RNA(n+1) + diphosphate. Promotes RNA polymerase assembly. Latches the N- and C-terminal regions of the beta' subunit thereby facilitating its interaction with the beta and alpha subunits. This Nautilia profundicola (strain ATCC BAA-1463 / DSM 18972 / AmH) protein is DNA-directed RNA polymerase subunit omega.